The sequence spans 467 residues: Argininosuccinate lyase (467 aa).

Belongs to the lyase 1 family. Argininosuccinate lyase subfamily.

It is found in the cytoplasm. It catalyses the reaction 2-(N(omega)-L-arginino)succinate = fumarate + L-arginine. It participates in amino-acid biosynthesis; L-arginine biosynthesis; L-arginine from L-ornithine and carbamoyl phosphate: step 3/3. The chain is Argininosuccinate lyase from Campylobacter curvus (strain 525.92).